An 86-amino-acid chain; its full sequence is Large ribosomal subunit protein bL27 (86 aa).

The protein belongs to the bacterial ribosomal protein bL27 family.

In Xanthomonas oryzae pv. oryzae (strain PXO99A), this protein is Large ribosomal subunit protein bL27.